Here is a 453-residue protein sequence, read N- to C-terminus: Ribulose bisphosphate carboxylase large chain (453 aa).

The propeptide occupies 1–2; it reads MS. Proline 3 carries the post-translational modification N-acetylproline. The residue at position 14 (lysine 14) is an N6,N6,N6-trimethyllysine. Asparagine 123 and threonine 173 together coordinate substrate. Residue lysine 175 is the Proton acceptor of the active site. Lysine 177 provides a ligand contact to substrate. Mg(2+)-binding residues include lysine 201, aspartate 203, and glutamate 204. N6-carboxylysine is present on lysine 201. The active-site Proton acceptor is the histidine 294. Positions 295, 327, and 379 each coordinate substrate.

It belongs to the RuBisCO large chain family. Type I subfamily. Heterohexadecamer of 8 large chains and 8 small chains; disulfide-linked. The disulfide link is formed within the large subunit homodimers. Mg(2+) serves as cofactor. Post-translationally, the disulfide bond which can form in the large chain dimeric partners within the hexadecamer appears to be associated with oxidative stress and protein turnover.

It localises to the plastid. The protein resides in the chloroplast. It carries out the reaction 2 (2R)-3-phosphoglycerate + 2 H(+) = D-ribulose 1,5-bisphosphate + CO2 + H2O. It catalyses the reaction D-ribulose 1,5-bisphosphate + O2 = 2-phosphoglycolate + (2R)-3-phosphoglycerate + 2 H(+). In terms of biological role, ruBisCO catalyzes two reactions: the carboxylation of D-ribulose 1,5-bisphosphate, the primary event in carbon dioxide fixation, as well as the oxidative fragmentation of the pentose substrate in the photorespiration process. Both reactions occur simultaneously and in competition at the same active site. In Galium palustre (Common marsh bedstraw), this protein is Ribulose bisphosphate carboxylase large chain.